The primary structure comprises 159 residues: 2-C-methyl-D-erythritol 2,4-cyclodiphosphate synthase (159 aa).

The a divalent metal cation site is built by Asp10 and His12. 4-CDP-2-C-methyl-D-erythritol 2-phosphate contacts are provided by residues 10-12 and 36-37; these read DVH and HS. An a divalent metal cation-binding site is contributed by His44. Residues 58–60, 63–67, 102–108, 134–137, Phe141, and Arg144 contribute to the 4-CDP-2-C-methyl-D-erythritol 2-phosphate site; these read DIG, FPDTD, AQAPKMA, and TTTE.

This sequence belongs to the IspF family. In terms of assembly, homotrimer. Requires a divalent metal cation as cofactor.

It catalyses the reaction 4-CDP-2-C-methyl-D-erythritol 2-phosphate = 2-C-methyl-D-erythritol 2,4-cyclic diphosphate + CMP. The protein operates within isoprenoid biosynthesis; isopentenyl diphosphate biosynthesis via DXP pathway; isopentenyl diphosphate from 1-deoxy-D-xylulose 5-phosphate: step 4/6. Functionally, involved in the biosynthesis of isopentenyl diphosphate (IPP) and dimethylallyl diphosphate (DMAPP), two major building blocks of isoprenoid compounds. Catalyzes the conversion of 4-diphosphocytidyl-2-C-methyl-D-erythritol 2-phosphate (CDP-ME2P) to 2-C-methyl-D-erythritol 2,4-cyclodiphosphate (ME-CPP) with a corresponding release of cytidine 5-monophosphate (CMP). This is 2-C-methyl-D-erythritol 2,4-cyclodiphosphate synthase from Shewanella halifaxensis (strain HAW-EB4).